Consider the following 148-residue polypeptide: Ribonuclease H (148 aa).

One can recognise an RNase H type-1 domain in the interval 3–144 (DKEQVVIYTD…ADQLANRGVA (142 aa)). Positions 12, 50, 72, and 136 each coordinate Mg(2+). A disordered region spans residues 125–148 (GHTGDPGNERADQLANRGVAELPR).

It belongs to the RNase H family. As to quaternary structure, monomer. The cofactor is Mg(2+).

It is found in the cytoplasm. The catalysed reaction is Endonucleolytic cleavage to 5'-phosphomonoester.. Endonuclease that specifically degrades the RNA of RNA-DNA hybrids. The sequence is that of Ribonuclease H from Pseudomonas paraeruginosa (strain DSM 24068 / PA7) (Pseudomonas aeruginosa (strain PA7)).